Reading from the N-terminus, the 531-residue chain is Peroxinectin A (531 aa).

Positions 1–21 are cleaved as a signal peptide; sequence MRLNLISFFIIFTILVSISNS. N62 is a glycosylation site (N-linked (GlcNAc...) asparagine). H101 (proton acceptor) is an active-site residue. 2 N-linked (GlcNAc...) asparagine glycosylation sites follow: N131 and N338.

It belongs to the peroxidase family.

It localises to the secreted. The enzyme catalyses 2 a phenolic donor + H2O2 = 2 a phenolic radical donor + 2 H2O. The sequence is that of Peroxinectin A (poxA) from Dictyostelium discoideum (Social amoeba).